We begin with the raw amino-acid sequence, 707 residues long: MSLWQPLVLVLLVLGCCFAAPRQRQSTLVLFPGDLRTNLTDRQLAEEYLYRYGYTRVAEMRGESKSLGPALLLLQKQLSLPETGELDSATLKAMRTPRCGVPDLGRFQTFEGDLKWHHHNITYWIQNYSEDLPRAVIDDAFARAFALWSAVTPLTFTRVYSRDADIVIQFGVAEHGDGYPFDGKDGLLAHAFPPGPGIQGDAHFDDDELWSLGKGVVVPTRFGNADGAACHFPFIFEGRSYSACTTDGRSDGLPWCSTTANYDTDDRFGFCPSERLYTQDGNADGKPCQFPFIFQGQSYSACTTDGRSDGYRWCATTANYDRDKLFGFCPTRADSTVMGGNSAGELCVFPFTFLGKEYSTCTSEGRGDGRLWCATTSNFDSDKKWGFCPDQGYSLFLVAAHEFGHALGLDHSSVPEALMYPMYRFTEGPPLHKDDVNGIRHLYGPRPEPEPRPPTTTTPQPTAPPTVCPTGPPTVHPSERPTAGPTGPPSAGPTGPPTAGPSTATTVPLSPVDDACNVNIFDAIAEIGNQLYLFKDGKYWRFSEGRGSRPQGPFLIADKWPALPRKLDSVFEERLSKKLFFFSGRQVWVYTGASVLGPRRLDKLGLGADVAQVTGALRSGRGKMLLFSGRRLWRFDVKAQMVDPRSASEVDRMFPGVPLDTHDVFQYREKAYFCQDRFYWRVSSRSELNQVDQVGYVTYDILQCPED.

The first 19 residues, 1-19 (MSLWQPLVLVLLVLGCCFA), serve as a signal peptide directing secretion. A propeptide spans 20 to 93 (APRQRQSTLV…GELDSATLKA (74 aa)) (activation peptide). Residue asparagine 38 is glycosylated (N-linked (GlcNAc...) asparagine). Positions 97-104 (PRCGVPDL) match the Cysteine switch motif. Cysteine 99 provides a ligand contact to Zn(2+). 2 N-linked (GlcNAc...) asparagine glycosylation sites follow: asparagine 120 and asparagine 127. Positions 131 and 165 each coordinate Ca(2+). Zn(2+) contacts are provided by histidine 175 and aspartate 177. 4 residues coordinate Ca(2+): aspartate 182, glycine 183, aspartate 185, and leucine 187. Residue histidine 190 coordinates Zn(2+). 3 residues coordinate Ca(2+): glycine 197, glutamine 199, and aspartate 201. Zn(2+) is bound at residue histidine 203. Ca(2+) contacts are provided by aspartate 205, aspartate 206, and glutamate 208. 3 Fibronectin type-II domains span residues 225–273 (ADGA…FCPS), 283–331 (ADGK…FCPT), and 342–390 (SAGE…FCPD). 6 cysteine pairs are disulfide-bonded: cysteine 230–cysteine 256, cysteine 244–cysteine 271, cysteine 288–cysteine 314, cysteine 302–cysteine 329, cysteine 347–cysteine 373, and cysteine 361–cysteine 388. Position 401 (histidine 401) interacts with Zn(2+). Glutamate 402 is an active-site residue. 2 residues coordinate Zn(2+): histidine 405 and histidine 411. Residues 431–508 (LHKDDVNGIR…AGPSTATTVP (78 aa)) are disordered. Composition is skewed to pro residues over residues 452-475 (RPPT…PPTV) and 486-499 (TGPP…PPTA). An intrachain disulfide couples cysteine 516 to cysteine 704. Hemopexin repeat units follow at residues 518 to 563 (VNIF…WPAL), 564 to 608 (PRKL…GLGA), 610 to 657 (VAQV…FPGV), and 658 to 704 (PLDT…ILQC).

It belongs to the peptidase M10A family. As to quaternary structure, exists as monomer or homodimer; disulfide-linked. Also exists as heterodimer with LCN2. Macrophages and transformed cell lines produce only the monomeric form. Interacts with ECM1. (Microbial infection) Interacts with Staphylococcus aureus protein SSL5; this interaction inhibits MMP9 activity. Zn(2+) serves as cofactor. Ca(2+) is required as a cofactor. Processing of the precursor yields different active forms of 64, 67 and 82 kDa. Sequentially processing by MMP3 yields the 82 kDa matrix metalloproteinase-9. Post-translationally, N- and O-glycosylated. As to expression, detected in neutrophils (at protein level). Produced by normal alveolar macrophages and granulocytes.

It localises to the secreted. It is found in the extracellular space. The protein localises to the extracellular matrix. The enzyme catalyses Cleavage of gelatin types I and V and collagen types IV and V.. With respect to regulation, inhibited by histatin-3 1/24 (histatin-5). Inhibited by ECM1. Its function is as follows. Matrix metalloproteinase that plays an essential role in local proteolysis of the extracellular matrix and in leukocyte migration. Could play a role in bone osteoclastic resorption. Cleaves KiSS1 at a Gly-|-Leu bond. Cleaves NINJ1 to generate the Secreted ninjurin-1 form. Cleaves type IV and type V collagen into large C-terminal three quarter fragments and shorter N-terminal one quarter fragments. Degrades fibronectin but not laminin or Pz-peptide. The sequence is that of Matrix metalloproteinase-9 (MMP9) from Homo sapiens (Human).